The primary structure comprises 479 residues: Anaerobic nitric oxide reductase flavorubredoxin (479 aa).

The segment at 30-210 (LRGSSYNSYL…PFSRLVTPKI (181 aa)) is zinc metallo-hydrolase. Residues H79, E81, D83, H147, D166, and H227 each contribute to the Fe cation site. The 140-residue stretch at 254 to 393 (ITIFYDTMSN…LCREHGREIA (140 aa)) folds into the Flavodoxin-like domain. FMN contacts are provided by residues 260–264 (TMSNN) and 342–369 (AFGS…EMSL). In terms of domain architecture, Rubredoxin-like spans 423–474 (GPRMQCSVCQWIYDPAKGEPMQDVAPGTPWSEVPDNFLCPECSLGKDVFEEL). Fe cation-binding residues include C428, C431, C461, and C464.

In the N-terminal section; belongs to the zinc metallo-hydrolase group 3 family. As to quaternary structure, homotetramer. Fe cation serves as cofactor. FMN is required as a cofactor.

The protein resides in the cytoplasm. It functions in the pathway nitrogen metabolism; nitric oxide reduction. In terms of biological role, anaerobic nitric oxide reductase; uses NADH to detoxify nitric oxide (NO), protecting several 4Fe-4S NO-sensitive enzymes. Has at least 2 reductase partners, only one of which (NorW, flavorubredoxin reductase) has been identified. NO probably binds to the di-iron center; electrons enter from the NorW at rubredoxin and are transferred sequentially to the FMN center and the di-iron center. Also able to function as an aerobic oxygen reductase. This Escherichia coli O139:H28 (strain E24377A / ETEC) protein is Anaerobic nitric oxide reductase flavorubredoxin.